Consider the following 276-residue polypeptide: 4-hydroxy-tetrahydrodipicolinate reductase (276 aa).

Gly-16 to Met-21 is an NAD(+) binding site. Position 44 (Lys-44) interacts with NADP(+). Residues Gly-109–Thr-111 and Ala-135–Phe-138 each bind NAD(+). His-165 functions as the Proton donor/acceptor in the catalytic mechanism. His-166 is a binding site for (S)-2,3,4,5-tetrahydrodipicolinate. Residue Lys-169 is the Proton donor of the active site. Gly-175–Thr-176 contributes to the (S)-2,3,4,5-tetrahydrodipicolinate binding site.

Belongs to the DapB family.

The protein localises to the cytoplasm. It catalyses the reaction (S)-2,3,4,5-tetrahydrodipicolinate + NAD(+) + H2O = (2S,4S)-4-hydroxy-2,3,4,5-tetrahydrodipicolinate + NADH + H(+). The catalysed reaction is (S)-2,3,4,5-tetrahydrodipicolinate + NADP(+) + H2O = (2S,4S)-4-hydroxy-2,3,4,5-tetrahydrodipicolinate + NADPH + H(+). Its pathway is amino-acid biosynthesis; L-lysine biosynthesis via DAP pathway; (S)-tetrahydrodipicolinate from L-aspartate: step 4/4. In terms of biological role, catalyzes the conversion of 4-hydroxy-tetrahydrodipicolinate (HTPA) to tetrahydrodipicolinate. This Thermosynechococcus vestitus (strain NIES-2133 / IAM M-273 / BP-1) protein is 4-hydroxy-tetrahydrodipicolinate reductase.